The chain runs to 197 residues: Transcription factor FapR (197 aa).

Belongs to the FapR family.

In terms of biological role, transcriptional factor involved in regulation of membrane lipid biosynthesis by repressing genes involved in fatty acid and phospholipid metabolism. This is Transcription factor FapR from Bacillus mycoides (strain KBAB4) (Bacillus weihenstephanensis).